The following is a 311-amino-acid chain: Methionyl-tRNA formyltransferase (311 aa).

A (6S)-5,6,7,8-tetrahydrofolate-binding site is contributed by 111 to 114 (SLLP).

It belongs to the Fmt family.

It catalyses the reaction L-methionyl-tRNA(fMet) + (6R)-10-formyltetrahydrofolate = N-formyl-L-methionyl-tRNA(fMet) + (6S)-5,6,7,8-tetrahydrofolate + H(+). Attaches a formyl group to the free amino group of methionyl-tRNA(fMet). The formyl group appears to play a dual role in the initiator identity of N-formylmethionyl-tRNA by promoting its recognition by IF2 and preventing the misappropriation of this tRNA by the elongation apparatus. This is Methionyl-tRNA formyltransferase from Caldicellulosiruptor saccharolyticus (strain ATCC 43494 / DSM 8903 / Tp8T 6331).